The sequence spans 317 residues: Acetyl-coenzyme A carboxylase carboxyl transferase subunit alpha (317 aa).

Residues 37–292 (EINKKLEQTK…ADYITKGYNE (256 aa)) form the CoA carboxyltransferase C-terminal domain.

The protein belongs to the AccA family. As to quaternary structure, acetyl-CoA carboxylase is a heterohexamer composed of biotin carboxyl carrier protein (AccB), biotin carboxylase (AccC) and two subunits each of ACCase subunit alpha (AccA) and ACCase subunit beta (AccD).

It localises to the cytoplasm. It catalyses the reaction N(6)-carboxybiotinyl-L-lysyl-[protein] + acetyl-CoA = N(6)-biotinyl-L-lysyl-[protein] + malonyl-CoA. It participates in lipid metabolism; malonyl-CoA biosynthesis; malonyl-CoA from acetyl-CoA: step 1/1. In terms of biological role, component of the acetyl coenzyme A carboxylase (ACC) complex. First, biotin carboxylase catalyzes the carboxylation of biotin on its carrier protein (BCCP) and then the CO(2) group is transferred by the carboxyltransferase to acetyl-CoA to form malonyl-CoA. This is Acetyl-coenzyme A carboxylase carboxyl transferase subunit alpha from Flavobacterium johnsoniae (strain ATCC 17061 / DSM 2064 / JCM 8514 / BCRC 14874 / CCUG 350202 / NBRC 14942 / NCIMB 11054 / UW101) (Cytophaga johnsonae).